We begin with the raw amino-acid sequence, 174 residues long: Small heat shock protein OV25-1 (174 aa).

One can recognise a sHSP domain in the interval 50 to 161; sequence LNECNIGNTL…ASRNIPIRAS (112 aa). The tract at residues 153-174 is disordered; the sequence is SRNIPIRASPKEPEAKQKTKKQ. Basic and acidic residues predominate over residues 161–174; the sequence is SPKEPEAKQKTKKQ.

The protein belongs to the small heat shock protein (HSP20) family.

The polypeptide is Small heat shock protein OV25-1 (OV25-1) (Onchocerca volvulus).